The sequence spans 557 residues: 6-phosphofructo-2-kinase/fructose-2,6-bisphosphatase 2 (557 aa).

A compositionally biased stretch (low complexity) spans 1–16 (MSENSTFSTEDSSSSS). Residues 1 to 21 (MSENSTFSTEDSSSSSYKPHA) form a disordered region. Position 2 is an N-acetylserine (Ser2). The tract at residues 2–251 (SENSTFSTED…VYYLMNIHVH (250 aa)) is 6-phosphofructo-2-kinase. Ser32 is subject to Phosphoserine; by PKA. ATP is bound at residue 48-56 (GLPARGKTY). The beta-D-fructose 6-phosphate site is built by Arg81 and Arg105. Residue Asp131 is part of the active site. Positions 133 and 139 each coordinate beta-D-fructose 6-phosphate. Cys161 is an active-site residue. 170–175 (NILEVK) provides a ligand contact to ATP. Positions 175, 196, and 200 each coordinate beta-D-fructose 6-phosphate. The segment at 252 to 557 (PRTIYLCRHG…PSMASLTLLS (306 aa)) is fructose-2,6-bisphosphatase. Arg259 is a beta-D-fructose 2,6-bisphosphate binding site. Residue His260 is the Tele-phosphohistidine intermediate of the active site. The beta-D-fructose 2,6-bisphosphate site is built by Asn266 and Gly272. Residue Glu329 is the Proton donor/acceptor of the active site. Tyr340, Arg354, Lys358, Tyr369, Gln395, and Arg399 together coordinate beta-D-fructose 2,6-bisphosphate. ATP is bound at residue 351 to 354 (FALR). Residues 395 to 399 (QAVMR) and Tyr431 contribute to the ATP site. The disordered stretch occupies residues 449-495 (RDKPTHNFPKSQTPVRMRRNSFTPLSSSNTIRRPRNYSVGSRPLKPL). Residues 456-479 (FPKSQTPVRMRRNSFTPLSSSNTI) are compositionally biased toward polar residues. Ser469 carries the post-translational modification Phosphoserine. A Phosphothreonine modification is found at Thr471. The residue at position 478 (Thr478) is a Phosphothreonine; by PKC. Phosphoserine occurs at positions 486 and 496.

It in the C-terminal section; belongs to the phosphoglycerate mutase family. Homodimer. Forms a heterodimer with PFKFB3. Post-translationally, phosphorylation by AMPK stimulates activity.

The catalysed reaction is beta-D-fructose 2,6-bisphosphate + H2O = beta-D-fructose 6-phosphate + phosphate. It carries out the reaction beta-D-fructose 6-phosphate + ATP = beta-D-fructose 2,6-bisphosphate + ADP + H(+). With respect to regulation, phosphorylation results in the activation of the kinase activity. Its function is as follows. Synthesis and degradation of fructose 2,6-bisphosphate. The polypeptide is 6-phosphofructo-2-kinase/fructose-2,6-bisphosphatase 2 (Pfkfb2) (Rattus norvegicus (Rat)).